The sequence spans 388 residues: Mannitol-1-phosphate 5-dehydrogenase (388 aa).

An NAD(+)-binding site is contributed by 3–14; that stretch reads ALHFGAGNIGRG.

This sequence belongs to the mannitol dehydrogenase family.

It carries out the reaction D-mannitol 1-phosphate + NAD(+) = beta-D-fructose 6-phosphate + NADH + H(+). The sequence is that of Mannitol-1-phosphate 5-dehydrogenase from Buchnera aphidicola subsp. Schizaphis graminum (strain Sg).